Reading from the N-terminus, the 248-residue chain is UPF0246 protein RAF_ORF0648 (248 aa).

Belongs to the UPF0246 family.

This Rickettsia africae (strain ESF-5) protein is UPF0246 protein RAF_ORF0648.